The following is a 373-amino-acid chain: Chaperone protein DnaJ (373 aa).

One can recognise a J domain in the interval 4 to 68 (NYYQILGVSK…QKRAAYDRLG (65 aa)). The segment at 136–214 (GIEKNINFSS…CHGMGRYHKQ (79 aa)) adopts a CR-type zinc-finger fold. Residues Cys-149, Cys-152, Cys-166, Cys-169, Cys-188, Cys-191, Cys-202, and Cys-205 each contribute to the Zn(2+) site. CXXCXGXG motif repeat units lie at residues 149–156 (CDTCHGSG), 166–173 (CDACSGVG), 188–195 (CHKCQGNG), and 202–209 (CKKCHGMG).

It belongs to the DnaJ family. Homodimer. It depends on Zn(2+) as a cofactor.

The protein localises to the cytoplasm. Participates actively in the response to hyperosmotic and heat shock by preventing the aggregation of stress-denatured proteins and by disaggregating proteins, also in an autonomous, DnaK-independent fashion. Unfolded proteins bind initially to DnaJ; upon interaction with the DnaJ-bound protein, DnaK hydrolyzes its bound ATP, resulting in the formation of a stable complex. GrpE releases ADP from DnaK; ATP binding to DnaK triggers the release of the substrate protein, thus completing the reaction cycle. Several rounds of ATP-dependent interactions between DnaJ, DnaK and GrpE are required for fully efficient folding. Also involved, together with DnaK and GrpE, in the DNA replication of plasmids through activation of initiation proteins. The protein is Chaperone protein DnaJ of Rickettsia rickettsii (strain Iowa).